Reading from the N-terminus, the 2230-residue chain is Genome polyprotein (2230 aa).

The disordered stretch occupies residues 59–80 (TAEVGAHQTEPLKTSVDKPGSK). 2 short sequence motifs ((L)YPX(n)L motif) span residues 171-175 (YPHGL) and 204-209 (YPVWEL). Positions 770 to 840 (MLDRIASGDL…PRKVKGLFSQ (71 aa)) are involved in P1-2A pentamerization. A helical transmembrane segment spans residues 1015 to 1035 (TVEIINTVLCFVKSGILLYVI). A membrane-penetrating ability region spans residues 1047–1074 (IGLLQVMNYADIGCSVISCGKIFSKMLE). Residues 1131–1156 (KKKDVLNVLKENQHRIEKAIEEADQF) adopt a coiled-coil conformation. The SF3 helicase domain occupies 1208 to 1370 (HQKLKNLGSI…SFYKNAHNDM (163 aa)). 1234 to 1241 (GKRGGGKS) contributes to the ATP binding site. A helical transmembrane segment spans residues 1466 to 1486 (WVAIGAAVGVLGVLVGGWFVY). Residue Y1501 is modified to O-(5'-phospho-RNA)-tyrosine. The 215-residue stretch at 1516-1730 (DPVDSQSTLE…VAKLVTQEMF (215 aa)) folds into the Peptidase C3 domain. Catalysis depends on for protease 3C activity residues H1565, D1605, and C1693. Residues 1979–2100 (DVGLDLDFSS…VFSRNVQIDN (122 aa)) enclose the RdRp catalytic domain.

Belongs to the picornaviridae polyprotein family. As to quaternary structure, homodimer. Homomultimer; probably interacts with membranes in a multimeric form. Seems to assemble into amyloid-like fibers. Homodimer. Monomer. Interacts with protein 3CD. In terms of assembly, interacts with host ACBD3. As to quaternary structure, interacts with protein 3AB. Interacts with human MAVS. In terms of assembly, homodimer; disulfide-linked. As to quaternary structure, homopentamer. Homooligomer. Interacts with capsid protein VP2. Interacts with capsid protein VP3. In terms of assembly, interacts with capsid protein VP1. Interacts with capsid protein VP3. As to quaternary structure, interacts with capsid protein VP1. Interacts with capsid protein VP2. Specific enzymatic cleavages by viral protease in vivo yield a variety of precursors and mature proteins. Polyprotein processing intermediates are produced, such as P1-2A which is a functional precursor of the structural proteins, VP0 which is a VP4-VP2 precursor, VP1-2A precursor, 3ABC precursor which is a stable and catalytically active precursor of 3A, 3B and 3C proteins, 3AB and 3CD precursors. The assembly signal 2A is removed from VP1-2A by a host protease, possibly host Cathepsin L. This cleavage occurs over a region of 3 amino-acids probably generating VP1 proteins with heterogeneous C-termini. Post-translationally, during virion maturation, immature virions are rendered infectious following cleavage of VP0 into VP4 and VP2. This maturation seems to be an autocatalytic event triggered by the presence of RNA in the capsid and is followed by a conformational change of the particle. In terms of processing, the assembly signal 2A is removed from VP1-2A by a host protease, possibly host Cathepsin L in naked virions. This cleavage does not occur in enveloped virions. This cleavage occurs over a region of 3 amino-acids probably generating VP1 proteins with heterogeneous C-termini. VPg is uridylylated prior to priming replication into VPg-pUpU. Post-translationally, unlike other picornaviruses, does not seem to be myristoylated.

The protein resides in the virion. The protein localises to the host endosome. It is found in the host multivesicular body. Its subcellular location is the host membrane. It localises to the host mitochondrion outer membrane. The protein resides in the host cytoplasm. The protein localises to the host cytoplasmic vesicle membrane. It carries out the reaction RNA(n) + a ribonucleoside 5'-triphosphate = RNA(n+1) + diphosphate. The catalysed reaction is a ribonucleoside 5'-triphosphate + H2O = a ribonucleoside 5'-diphosphate + phosphate + H(+). The enzyme catalyses Selective cleavage of Gln-|-Gly bond in the poliovirus polyprotein. In other picornavirus reactions Glu may be substituted for Gln, and Ser or Thr for Gly.. In terms of biological role, capsid proteins VP1, VP2, and VP3 form a closed capsid enclosing the viral positive strand RNA genome. All these proteins contain a beta-sheet structure called beta-barrel jelly roll. Together they form an icosahedral capsid (T=3) composed of 60 copies of each VP1, VP2, and VP3, with a diameter of approximately 300 Angstroms. VP1 is situated at the 12 fivefold axes, whereas VP2 and VP3 are located at the quasi-sixfold axes. The naked capsid interacts with the host receptor HAVCR1 to provide virion attachment to and probably entry into the target cell. Functionally, VP0 precursor is a component of the immature procapsids. Its function is as follows. Plays a role in the assembly of the 12 pentamers into an icosahedral structure. Has not been detected in mature virions, supposedly owing to its small size. Precursor component of immature procapsids that corresponds to an extended form of the structural protein VP1. After maturation, possibly by the host Cathepsin L, the assembly signal 2A is cleaved to give rise to the mature VP1 protein. In terms of biological role, functions as a viroporin. Affects membrane integrity and causes an increase in membrane permeability. Involved in host intracellular membrane rearrangements probably to give rise to the viral factories. Does not disrupt calcium homeostasis or glycoprotein trafficking. Antagonizes the innate immune response of the host by suppressing IFN-beta synthesis, which it achieves by interfering with the RIG-I/IFIH1 pathway. Functionally, affects membrane integrity and causes an increase in membrane permeability. Its function is as follows. Associates with and induces structural rearrangements of intracellular membranes. Displays RNA-binding activity. The precursor 3ABC is targeted to the mitochondrial membrane where protease 3C activity cleaves and inhibits the host antiviral protein MAVS, thereby disrupting activation of IRF3 through the IFIH1/MDA5 pathway. In vivo, the protease activity of 3ABC precursor is more efficient in cleaving the 2BC precursor than that of protein 3C. The 3ABC precursor may therefore play a role in the proteolytic processing of the polyprotein. Possible viroporin. In terms of biological role, interacts with the 3CD precursor and with RNA structures found at both the 5'- and 3'-termini of the viral genome. Since the 3AB precursor contains the hydrophobic domain 3A, it probably anchors the whole viral replicase complex to intracellular membranes on which viral RNA synthesis occurs. Functionally, may serve as membrane anchor to the 3AB and 3ABC precursors via its hydrophobic domain. May interact with RNA. Its function is as follows. Acts as a primer for viral RNA replication and remains covalently bound to viral genomic RNA. VPg is uridylylated prior to priming replication into VPg-pUpU. The VPg-pUpU is then used as primer on the genomic RNA poly(A) by the RNA-dependent RNA polymerase to replicate the viral genome. Cysteine protease that generates mature viral proteins from the precursor polyprotein. In addition to its proteolytic activity, it binds to viral RNA, and thus influences viral genome replication. RNA and substrate bind cooperatively to the protease. Cleaves IKBKG/NEMO to impair innate immune signaling. Cleaves host PABPC1 which may participate in the switch of viral translation to RNA synthesis. In terms of biological role, interacts with the 3AB precursor and with RNA structures found at both the 5'- and 3'-termini of the viral genome. Disrupts TLR3 signaling by degrading the host adapter protein TICAM1/TRIF. Functionally, RNA-directed RNA polymerase 3D-POL replicates genomic and antigenomic RNA by recognizing replications specific signals. This chain is Genome polyprotein, found in Callithrix (Owl-faced monkey).